We begin with the raw amino-acid sequence, 110 residues long: Chagasin (110 aa).

Residues 29–34 (NPTTGF) carry the BC loop motif. Residues 59–68 (PPDSKLLGAG) carry the DE loop motif. The short motif at 91–100 (RPWTGPSHDS) is the FG loop element.

The protein belongs to the protease inhibitor I42 family. Interacts with cruzipain.

It is found in the flagellar pocket. It localises to the cytoplasmic vesicle. Its subcellular location is the cell surface. Functionally, cysteine protease inhibitor. Inhibits cysteine protease cruzipain. This Trypanosoma cruzi protein is Chagasin (cha).